Reading from the N-terminus, the 562-residue chain is IRK-interacting protein (562 aa).

Disordered stretches follow at residues 29–61 (ASLMQMKSSPSSNYSLRNPSSSSAASPASRPLP) and 303–322 (VVSQENSGGRSSGKKNSEMP). Over residues 36-61 (SSPSSNYSLRNPSSSSAASPASRPLP) the composition is skewed to low complexity. Residues 246 to 306 (SGVEKLKREL…LREATEVVSQ (61 aa)) adopt a coiled-coil conformation.

As to quaternary structure, interacts with IRK. In terms of tissue distribution, highly expressed in root tips, shoot apices and developing flowers.

This chain is IRK-interacting protein, found in Arabidopsis thaliana (Mouse-ear cress).